Consider the following 313-residue polypeptide: ADP-L-glycero-D-manno-heptose-6-epimerase (313 aa).

Residues 10–11, 31–32, Lys38, Lys53, 75–79, and Asn92 each bind NADP(+); these read MI, DN, and EGACS. Tyr139 functions as the Proton acceptor in the catalytic mechanism. Lys143 lines the NADP(+) pocket. Substrate is bound at residue Asn174. Residues Val175 and Lys183 each contribute to the NADP(+) site. The Proton acceptor role is filled by Lys183. Substrate contacts are provided by residues Ser185, His192, 206–209, Arg214, and Tyr277; that span reads FEGS.

It belongs to the NAD(P)-dependent epimerase/dehydratase family. HldD subfamily. As to quaternary structure, homopentamer. Requires NADP(+) as cofactor.

It carries out the reaction ADP-D-glycero-beta-D-manno-heptose = ADP-L-glycero-beta-D-manno-heptose. Its pathway is nucleotide-sugar biosynthesis; ADP-L-glycero-beta-D-manno-heptose biosynthesis; ADP-L-glycero-beta-D-manno-heptose from D-glycero-beta-D-manno-heptose 7-phosphate: step 4/4. Functionally, catalyzes the interconversion between ADP-D-glycero-beta-D-manno-heptose and ADP-L-glycero-beta-D-manno-heptose via an epimerization at carbon 6 of the heptose. The polypeptide is ADP-L-glycero-D-manno-heptose-6-epimerase (Aliivibrio fischeri (strain ATCC 700601 / ES114) (Vibrio fischeri)).